Here is a 664-residue protein sequence, read N- to C-terminus: UvrABC system protein B (664 aa).

Residues 24–182 (AGLRAGYRHQ…QLIDLQFERN (159 aa)) form the Helicase ATP-binding domain. Residue 37–44 (GATGTGKT) participates in ATP binding. The Beta-hairpin signature appears at 90 to 113 (YYDEYTPEAYVPSKDLYIEKEASI). Positions 427–593 (QIDDLLGEIR…GIAKGVRDLT (167 aa)) constitute a Helicase C-terminal domain. The UVR domain occupies 624 to 659 (LKLIKDLEKQMKQAAKALAFEKAAALRDQIVELRQA).

Belongs to the UvrB family. As to quaternary structure, forms a heterotetramer with UvrA during the search for lesions. Interacts with UvrC in an incision complex.

The protein localises to the cytoplasm. Functionally, the UvrABC repair system catalyzes the recognition and processing of DNA lesions. A damage recognition complex composed of 2 UvrA and 2 UvrB subunits scans DNA for abnormalities. Upon binding of the UvrA(2)B(2) complex to a putative damaged site, the DNA wraps around one UvrB monomer. DNA wrap is dependent on ATP binding by UvrB and probably causes local melting of the DNA helix, facilitating insertion of UvrB beta-hairpin between the DNA strands. Then UvrB probes one DNA strand for the presence of a lesion. If a lesion is found the UvrA subunits dissociate and the UvrB-DNA preincision complex is formed. This complex is subsequently bound by UvrC and the second UvrB is released. If no lesion is found, the DNA wraps around the other UvrB subunit that will check the other stand for damage. The chain is UvrABC system protein B from Chloroflexus aggregans (strain MD-66 / DSM 9485).